Consider the following 122-residue polypeptide: Large ribosomal subunit protein bL12 (122 aa).

The protein belongs to the bacterial ribosomal protein bL12 family. Homodimer. Part of the ribosomal stalk of the 50S ribosomal subunit. Forms a multimeric L10(L12)X complex, where L10 forms an elongated spine to which 2 to 4 L12 dimers bind in a sequential fashion. Binds GTP-bound translation factors.

In terms of biological role, forms part of the ribosomal stalk which helps the ribosome interact with GTP-bound translation factors. Is thus essential for accurate translation. The chain is Large ribosomal subunit protein bL12 from Acinetobacter baumannii (strain AB0057).